We begin with the raw amino-acid sequence, 229 residues long: Cytidylate kinase (229 aa).

12-20 contributes to the ATP binding site; it reads GPSGAGKGT.

Belongs to the cytidylate kinase family. Type 1 subfamily.

It localises to the cytoplasm. The catalysed reaction is CMP + ATP = CDP + ADP. It catalyses the reaction dCMP + ATP = dCDP + ADP. The protein is Cytidylate kinase of Pseudomonas aeruginosa (strain LESB58).